The chain runs to 358 residues: 3-isopropylmalate dehydrogenase (358 aa).

Residues arginine 92, arginine 102, arginine 130, and aspartate 224 each coordinate substrate. Mg(2+) contacts are provided by aspartate 224, aspartate 248, and aspartate 252. Residue 282–294 (GSAPDIAGQGIAN) coordinates NAD(+).

The protein belongs to the isocitrate and isopropylmalate dehydrogenases family. LeuB type 1 subfamily. In terms of assembly, homodimer. Mg(2+) is required as a cofactor. It depends on Mn(2+) as a cofactor.

The protein localises to the cytoplasm. The catalysed reaction is (2R,3S)-3-isopropylmalate + NAD(+) = 4-methyl-2-oxopentanoate + CO2 + NADH. It functions in the pathway amino-acid biosynthesis; L-leucine biosynthesis; L-leucine from 3-methyl-2-oxobutanoate: step 3/4. Functionally, catalyzes the oxidation of 3-carboxy-2-hydroxy-4-methylpentanoate (3-isopropylmalate) to 3-carboxy-4-methyl-2-oxopentanoate. The product decarboxylates to 4-methyl-2 oxopentanoate. The chain is 3-isopropylmalate dehydrogenase from Bordetella avium (strain 197N).